The following is a 282-amino-acid chain: MPLLTQQIQDEDDQYSLVASLDNVRNLSTILKAIHFREHATCFATKNGIKVTVENAKCVQANAFIQAGIFQEFKVQEESVTFRINLTVLLDCLSIFGSSPMPGTLTALRMCYQGYGYPLMLFLEEGGVVTVCKINTQEPEETLDFDFCSTNVINKIILQSEGLREAFSELDMTSEVLQITMSPDKPYFRLSTFGNAGSSHLDYPKDSDLMEAFHCNQTQVNRYKISLLKPSTKALVLSCKVSIRTDNRGFLSLQYMIRNEDGQICFVEYYCCPDEEVPESES.

This sequence belongs to the rad1 family. In terms of assembly, component of the toroidal 9-1-1 (RAD9-RAD1-HUS1) complex, composed of RAD9A, RAD1 and HUS1. The 9-1-1 complex associates with LIG1, POLB, FEN1, RAD17, HDAC1, RPA1 and RPA2. The 9-1-1 complex associates with the RAD17-RFC complex. RAD1 interacts with POLB, FEN1, HUS1, HUS1B, RAD9A and RAD9B. Interacts with DNAJC7. Interacts with RHNO1; interaction is direct. In terms of tissue distribution, expressed in testis, uterus, bladder, spleen, ovaries, lung, brain and muscle (at protein level).

The protein localises to the nucleus. Its function is as follows. Component of the 9-1-1 cell-cycle checkpoint response complex that plays a major role in DNA repair. The 9-1-1 complex is recruited to DNA lesion upon damage by the RAD17-replication factor C (RFC) clamp loader complex. Acts then as a sliding clamp platform on DNA for several proteins involved in long-patch base excision repair (LP-BER). The 9-1-1 complex stimulates DNA polymerase beta (POLB) activity by increasing its affinity for the 3'-OH end of the primer-template and stabilizes POLB to those sites where LP-BER proceeds; endonuclease FEN1 cleavage activity on substrates with double, nick, or gap flaps of distinct sequences and lengths; and DNA ligase I (LIG1) on long-patch base excision repair substrates. The 9-1-1 complex is necessary for the recruitment of RHNO1 to sites of double-stranded breaks (DSB) occurring during the S phase. This is Cell cycle checkpoint protein RAD1 (RAD1) from Homo sapiens (Human).